The chain runs to 622 residues: Probable Xaa-Pro aminopeptidase P (622 aa).

D419, D430, E528, and E542 together coordinate Mn(2+).

Belongs to the peptidase M24B family. It depends on Mn(2+) as a cofactor.

It catalyses the reaction Release of any N-terminal amino acid, including proline, that is linked to proline, even from a dipeptide or tripeptide.. Its function is as follows. Catalyzes the removal of a penultimate prolyl residue from the N-termini of peptides. This chain is Probable Xaa-Pro aminopeptidase P (AMPP), found in Coprinopsis cinerea (strain Okayama-7 / 130 / ATCC MYA-4618 / FGSC 9003) (Inky cap fungus).